The primary structure comprises 316 residues: L-lactate dehydrogenase (316 aa).

NAD(+) is bound at residue 34 to 39 (DVVEGV). Substrate contacts are provided by Arg-89, Asn-121, and Arg-152. Position 121 (Asn-121) interacts with NAD(+). His-172 (proton acceptor) is an active-site residue.

This sequence belongs to the LDH/MDH superfamily. LDH family. In terms of assembly, homotetramer.

It carries out the reaction (S)-lactate + NAD(+) = pyruvate + NADH + H(+). Its pathway is fermentation; pyruvate fermentation to lactate; (S)-lactate from pyruvate: step 1/1. This is L-lactate dehydrogenase from Botryococcus braunii (Green alga).